Here is a 190-residue protein sequence, read N- to C-terminus: Segregation and condensation protein B (190 aa).

It belongs to the ScpB family. Homodimer. Homodimerization may be required to stabilize the binding of ScpA to the Smc head domains. Component of a cohesin-like complex composed of ScpA, ScpB and the Smc homodimer, in which ScpA and ScpB bind to the head domain of Smc. The presence of the three proteins is required for the association of the complex with DNA.

The protein resides in the cytoplasm. Its function is as follows. Participates in chromosomal partition during cell division. May act via the formation of a condensin-like complex containing Smc and ScpA that pull DNA away from mid-cell into both cell halves. This is Segregation and condensation protein B from Bacillus mycoides (strain KBAB4) (Bacillus weihenstephanensis).